Reading from the N-terminus, the 359-residue chain is MKKTAIALAVALAGFATVAQAAPKDNTWYTGAKLGWSQYHDTGFYGNGYQNGIGNGPTHKDQLGAGAFLGYQANQYLGFELGYDWLGRMPYKGSVNNGAFKAQGVQLAAKLSYPIADDLDIYTRLGGMVWRADSKANYGRTGQRLSDHDTGVSPLAAVGVEYALTKNWATRLDYQFVSNIGDAGTVGARPDNTMLSLGVSYRFGQDDVVAPAPAPAPAPVVETKRFTLKSDVLFNFNKSTLKAEGQQALDQLYTQLSSMDPKDGSVVVLGYTDAVGSDQYNQKLSEQRAQSVVDYLVSKGIPSDKISARGMGEADAVTGNTCGYKSGRATKAQIVCLAPDRRVEIEVKGIKDVVTQPQG.

The N-terminal stretch at 1–21 (MKKTAIALAVALAGFATVAQA) is a signal peptide. A run of 8 beta stranded transmembrane segments spans residues 27-37 (TWYTGAKLGWS), 62-73 (QLGAGAFLGYQA), 77-85 (LGFELGYDW), 103-114 (QGVQLAAKLSYP), 119-127 (LDIYTRLGG), 154-163 (PLAAVGVEYA), 168-175 (WATRLDYQ), and 194-202 (MLSLGVSYR). A run of 5 repeats spans residues 210–211 (AP), 212–213 (AP), 214–215 (AP), 216–217 (AP), and 218–219 (AP). The 5 X 2 AA tandem repeats of A-P stretch occupies residues 210 to 219 (APAPAPAPAP). The region spanning 221 to 351 (VETKRFTLKS…RVEIEVKGIK (131 aa)) is the OmpA-like domain. Cysteines 322 and 336 form a disulfide.

Belongs to the outer membrane OOP (TC 1.B.6) superfamily. OmpA family. Monomer and homodimer.

It localises to the cell outer membrane. Functionally, with TolR probably plays a role in maintaining the position of the peptidoglycan cell wall in the periplasm. Acts as a porin with low permeability that allows slow penetration of small solutes; an internal gate slows down solute passage. The protein is Outer membrane protein A of Serratia marcescens.